Consider the following 1244-residue polypeptide: Ras-specific guanine nucleotide-releasing factor 2 (1244 aa).

In terms of domain architecture, PH 1 spans 22 to 129 (EGTKRGYLSK…WVEAIQQASY (108 aa)). Residues 147–189 (VQIVETEKVAANQLRTQLEDQDTEIERLKAEIIALNKTKERMR) are a coiled coil. An IQ domain is found at 201–230 (DIKKIKKVQSFMRGWLCRRKWKIIVQDYIC). In terms of domain architecture, DH spans 239–425 (KRNQIVFNMV…EELSRVMHDE (187 aa)). Residues 466–584 (PSVERGKLSK…WTSDISQCID (119 aa)) form the PH 2 domain. The N-terminal Ras-GEF domain maps to 631–745 (KVPQIRYASV…PVRTRKLSLN (115 aa)). Disordered stretches follow at residues 704–743 (NRSG…RKLS), 759–814 (TTSS…NAEV), and 843–879 (PESP…AENS). The segment covering 706–715 (SGDHVNDKSP) has biased composition (basic and acidic residues). The span at 728-743 (SISSRTSSPVRTRKLS) shows a compositional bias: polar residues. 2 stretches are compositionally biased toward low complexity: residues 759-774 (TTSS…ANPT) and 781-806 (NNNN…QSPG). A Ras-GEF domain is found at 1009–1241 (SAMEIAEQIT…YDLSLKIEPR (233 aa)).

The protein localises to the cytoplasm. It is found in the cell membrane. Its subcellular location is the endoplasmic reticulum membrane. Functions as a calcium-regulated nucleotide exchange factor activating both Ras and rac1 through the exchange of bound GDP for GTP. May function in synaptic plasticity. The sequence is that of Ras-specific guanine nucleotide-releasing factor 2 (rasgrf2) from Danio rerio (Zebrafish).